We begin with the raw amino-acid sequence, 196 residues long: Pyridoxal 5'-phosphate synthase subunit PdxT (196 aa).

52 to 54 (GES) is an L-glutamine binding site. Cysteine 84 (nucleophile) is an active-site residue. L-glutamine is bound by residues arginine 113 and 141–142 (IR). Catalysis depends on charge relay system residues histidine 178 and glutamate 180.

It belongs to the glutaminase PdxT/SNO family. In the presence of PdxS, forms a dodecamer of heterodimers. Only shows activity in the heterodimer.

It catalyses the reaction aldehydo-D-ribose 5-phosphate + D-glyceraldehyde 3-phosphate + L-glutamine = pyridoxal 5'-phosphate + L-glutamate + phosphate + 3 H2O + H(+). The catalysed reaction is L-glutamine + H2O = L-glutamate + NH4(+). It participates in cofactor biosynthesis; pyridoxal 5'-phosphate biosynthesis. Catalyzes the hydrolysis of glutamine to glutamate and ammonia as part of the biosynthesis of pyridoxal 5'-phosphate. The resulting ammonia molecule is channeled to the active site of PdxS. The protein is Pyridoxal 5'-phosphate synthase subunit PdxT of Pyrococcus abyssi (strain GE5 / Orsay).